A 140-amino-acid chain; its full sequence is Large ribosomal subunit protein uL16 (140 aa).

This sequence belongs to the universal ribosomal protein uL16 family. Part of the 50S ribosomal subunit.

Its function is as follows. Binds 23S rRNA and is also seen to make contacts with the A and possibly P site tRNAs. The protein is Large ribosomal subunit protein uL16 of Cytophaga hutchinsonii (strain ATCC 33406 / DSM 1761 / CIP 103989 / NBRC 15051 / NCIMB 9469 / D465).